A 263-amino-acid polypeptide reads, in one-letter code: GTP cyclohydrolase 1 type 2 homolog (263 aa).

Residues H76, H77, D113, H231, and E235 each contribute to the a divalent metal cation site.

Belongs to the GTP cyclohydrolase I type 2/NIF3 family. In terms of assembly, homohexamer.

This is GTP cyclohydrolase 1 type 2 homolog from Deinococcus radiodurans (strain ATCC 13939 / DSM 20539 / JCM 16871 / CCUG 27074 / LMG 4051 / NBRC 15346 / NCIMB 9279 / VKM B-1422 / R1).